The chain runs to 309 residues: Ribonuclease Z (309 aa).

His63, His65, Asp67, His68, His145, Asp216, and His274 together coordinate Zn(2+). The active-site Proton acceptor is Asp67.

The protein belongs to the RNase Z family. Homodimer. It depends on Zn(2+) as a cofactor.

The catalysed reaction is Endonucleolytic cleavage of RNA, removing extra 3' nucleotides from tRNA precursor, generating 3' termini of tRNAs. A 3'-hydroxy group is left at the tRNA terminus and a 5'-phosphoryl group is left at the trailer molecule.. In terms of biological role, zinc phosphodiesterase, which displays some tRNA 3'-processing endonuclease activity. Probably involved in tRNA maturation, by removing a 3'-trailer from precursor tRNA. The polypeptide is Ribonuclease Z (Streptococcus agalactiae serotype V (strain ATCC BAA-611 / 2603 V/R)).